The following is a 369-amino-acid chain: Olfactory receptor 2T1 (369 aa).

Residues Met1 to Leu76 lie on the Extracellular side of the membrane. Asn56 carries N-linked (GlcNAc...) asparagine glycosylation. The helical transmembrane segment at Ile77 to Phe97 threads the bilayer. Residues Leu98–Thr107 lie on the Cytoplasmic side of the membrane. A helical membrane pass occupies residues Pro108 to Val128. Residues Pro129 to Thr148 are Extracellular-facing. Cys147 and Cys239 form a disulfide bridge. A helical transmembrane segment spans residues Ala149–Ala169. Residues Tyr170–Cys191 lie on the Cytoplasmic side of the membrane. Residues Trp192 to Ile212 traverse the membrane as a helical segment. The Extracellular segment spans residues Thr213 to Thr247. Residues Val248–Tyr268 form a helical membrane-spanning segment. The Cytoplasmic segment spans residues Ala269–Lys286. The helical transmembrane segment at Ala287–Tyr307 threads the bilayer. At Thr308–Asp321 the chain is on the extracellular side. The helical transmembrane segment at Lys322 to Leu342 threads the bilayer. Topologically, residues Arg343 to Phe369 are cytoplasmic.

Belongs to the G-protein coupled receptor 1 family.

It is found in the cell membrane. Odorant receptor. This is Olfactory receptor 2T1 (OR2T1) from Homo sapiens (Human).